Consider the following 304-residue polypeptide: Coenzyme PQQ synthesis protein B (304 aa).

It belongs to the PqqB family.

It functions in the pathway cofactor biosynthesis; pyrroloquinoline quinone biosynthesis. Its function is as follows. May be involved in the transport of PQQ or its precursor to the periplasm. This chain is Coenzyme PQQ synthesis protein B, found in Pseudomonas aeruginosa (strain ATCC 15692 / DSM 22644 / CIP 104116 / JCM 14847 / LMG 12228 / 1C / PRS 101 / PAO1).